Consider the following 498-residue polypeptide: Cysteine--tRNA ligase (498 aa).

Residue Cys-44 coordinates Zn(2+). Residues 46 to 56 (PTVYSDAHLGH) carry the 'HIGH' region motif. 3 residues coordinate Zn(2+): Cys-235, His-260, and Glu-264. The 'KMSKS' region motif lies at 291–295 (KMSKS). Lys-294 contacts ATP.

It belongs to the class-I aminoacyl-tRNA synthetase family. Monomer. It depends on Zn(2+) as a cofactor.

It is found in the cytoplasm. The catalysed reaction is tRNA(Cys) + L-cysteine + ATP = L-cysteinyl-tRNA(Cys) + AMP + diphosphate. This Deinococcus radiodurans (strain ATCC 13939 / DSM 20539 / JCM 16871 / CCUG 27074 / LMG 4051 / NBRC 15346 / NCIMB 9279 / VKM B-1422 / R1) protein is Cysteine--tRNA ligase (cysS).